The following is an 816-amino-acid chain: H(+)/Cl(-) exchange transporter 5 (816 aa).

The tract at residues 1 to 28 is disordered; that stretch reads MAMWQGAMDNRGFQQGSFNSFQSSSSDE. Residues 1–124 lie on the Cytoplasmic side of the membrane; sequence MAMWQGAMDN…WALIHSVSDA (124 aa). The segment covering 12 to 25 has biased composition (low complexity); it reads GFQQGSFNSFQSSS. 2 helical membrane passes run 125 to 162 and 208 to 231; these read FSGW…ICTE and VNYF…VKVF. The Selectivity filter part_1 signature appears at 237–241; that stretch reads GSGIP. Ser-238 is a chloride binding site. Positions 240 to 247 form an intramembrane region, helical; it reads IPEIKTIL. 2 consecutive transmembrane segments (helical) span residues 256 to 275 and 281 to 300; these read LGKW…VSSG and EGPL…HCFN. Residues 279–283 carry the Selectivity filter part_2 motif; the sequence is GKEGP. 2 intramembrane regions (helical) span residues 312–324 and 328–336; these read VLSA…VSVA and PIGGVLFSL. 5 consecutive transmembrane segments (helical) span residues 348 to 366, 389 to 414, 422 to 442, 498 to 518, and 523 to 542; these read LWRS…RSIN, LVPF…IAWC, LGKY…ILAF, MWQL…TFGM, and GLFI…LGVG. The short motif at 523–527 is the Selectivity filter part_3 element; it reads GLFIP. Residue Phe-525 participates in chloride binding. The segment at residues 570-584 is an intramembrane region (helical); it reads GLYAMVGAAACLGGV. The segment at residues 585-587 is an intramembrane region (note=Loop between two helices); the sequence is TRM. Positions 588 to 599 form an intramembrane region, helical; sequence TVSLVVIMFELT. Residues 600-604 constitute an intramembrane region (note=Loop between two helices); it reads GGLEY. Residues 605 to 622 form a helical membrane-spanning segment; it reads IVPLMAAAMTSKWVADAL. Residues 623–816 are Cytoplasmic-facing; sequence GREGIYDAHI…NQDPDSILFN (194 aa). Residue Tyr-628 participates in chloride binding. CBS domains follow at residues 656 to 720 and 752 to 812; these read MKPR…ARKK and ILDL…DPDS. Residues Thr-666, 687-689, and 794-797 contribute to the ATP site; these read YSG and TKKD.

It belongs to the chloride channel (TC 2.A.49) family. ClC-5/CLCN5 subfamily. Interacts with NEDD4 and NEDD4L. Post-translationally, ubiquitinated by NEDD4L in the presence of albumin; which promotes endocytosis and proteasomal degradation.

The protein resides in the golgi apparatus membrane. The protein localises to the endosome membrane. It is found in the cell membrane. The enzyme catalyses 2 chloride(in) + H(+)(out) = 2 chloride(out) + H(+)(in). Proton-coupled chloride transporter. Functions as antiport system and exchanges chloride ions against protons. Important for normal acidification of the endosome lumen. May play an important role in renal tubular function. The CLC channel family contains both chloride channels and proton-coupled anion transporters that exchange chloride or another anion for protons. The absence of conserved gating glutamate residues is typical for family members that function as channels. In Sus scrofa (Pig), this protein is H(+)/Cl(-) exchange transporter 5 (CLCN5).